Reading from the N-terminus, the 681-residue chain is Methionine--tRNA ligase (681 aa).

A 'HIGH' region motif is present at residues 27 to 37 (DYANGTPHIGH). Residues 316 to 320 (KMGKS) carry the 'KMSKS' region motif. Lys319 serves as a coordination point for ATP. The tract at residues 522–571 (FPKPEPKADETKNAEAKPPKPQAKKEKKTVTDTAPAKTTEQKPEAAAPAQ) is disordered. A compositionally biased stretch (basic and acidic residues) spans 525–539 (PEPKADETKNAEAKP). Residues 580 to 681 (DFAKIDLRIA…LDLPSGTKVR (102 aa)) enclose the tRNA-binding domain.

The protein belongs to the class-I aminoacyl-tRNA synthetase family. MetG type 2B subfamily. In terms of assembly, homodimer.

Its subcellular location is the cytoplasm. It catalyses the reaction tRNA(Met) + L-methionine + ATP = L-methionyl-tRNA(Met) + AMP + diphosphate. Functionally, is required not only for elongation of protein synthesis but also for the initiation of all mRNA translation through initiator tRNA(fMet) aminoacylation. In Deinococcus radiodurans (strain ATCC 13939 / DSM 20539 / JCM 16871 / CCUG 27074 / LMG 4051 / NBRC 15346 / NCIMB 9279 / VKM B-1422 / R1), this protein is Methionine--tRNA ligase (metG).